Consider the following 87-residue polypeptide: Large ribosomal subunit protein bL27 (87 aa).

Positions 1-25 (MAHKKGASSSRNGRDSNAQRLGVKR) are disordered. Polar residues predominate over residues 7 to 19 (ASSSRNGRDSNAQ).

The protein belongs to the bacterial ribosomal protein bL27 family.

The protein is Large ribosomal subunit protein bL27 of Rhodococcus opacus (strain B4).